We begin with the raw amino-acid sequence, 328 residues long: MMENVFDYEDIQLIPAKCIVNSRSECDTTVTLGKHKFKLPVVPANMQTIIDERIATYLAENNYFYIMHRFQPEKRISFIRDMQSRGLIASISVGVKEDEYEFVQQLAAEHLTPEYITIDIAHGHSNAVINMIQHIKKHLPESFVIAGNVGTPEAVRELENAGADATKVGIGPGKVCITKIKTGFGTGGWQLAALRWCAKAASKPIIADGGIRTHGDVAKSIRFGATMVMIGSLFAGHEESPGETIEKDGKLYKEYFGSASEFQKGEKKNVEGKKMFVEHKGSLEDTLIEMEQDLQSSISYAGGTKLDSIRTVDYVVVKNSIFNGDKVY.

Cys176 functions as the Thioimidate intermediate in the catalytic mechanism. Position 205-228 (205-228) interacts with NADP(+); the sequence is IIADGGIRTHGDVAKSIRFGATMV.

Belongs to the IMPDH/GMPR family. GuaC type 2 subfamily.

It catalyses the reaction IMP + NH4(+) + NADP(+) = GMP + NADPH + 2 H(+). Its function is as follows. Catalyzes the irreversible NADPH-dependent deamination of GMP to IMP. It functions in the conversion of nucleobase, nucleoside and nucleotide derivatives of G to A nucleotides, and in maintaining the intracellular balance of A and G nucleotides. This is GMP reductase from Bacillus thuringiensis (strain Al Hakam).